The chain runs to 673 residues: Elongation factor G 1 (673 aa).

The 275-residue stretch at 3 to 277 folds into the tr-type G domain; that stretch reads KELRNIGIIA…SIVDYLPSPL (275 aa). Residues 12–19, 76–80, and 130–133 each bind GTP; these read AHIDAGKT, DTPGH, and NKMD.

This sequence belongs to the TRAFAC class translation factor GTPase superfamily. Classic translation factor GTPase family. EF-G/EF-2 subfamily.

The protein resides in the cytoplasm. Its function is as follows. Catalyzes the GTP-dependent ribosomal translocation step during translation elongation. During this step, the ribosome changes from the pre-translocational (PRE) to the post-translocational (POST) state as the newly formed A-site-bound peptidyl-tRNA and P-site-bound deacylated tRNA move to the P and E sites, respectively. Catalyzes the coordinated movement of the two tRNA molecules, the mRNA and conformational changes in the ribosome. The sequence is that of Elongation factor G 1 from Syntrophomonas wolfei subsp. wolfei (strain DSM 2245B / Goettingen).